The sequence spans 208 residues: Small ribosomal subunit protein uS3 (208 aa).

Positions 16-85 constitute a KH type-2 domain; the sequence is VDEYLKNKLP…KPQIEVKQIE (70 aa).

Belongs to the universal ribosomal protein uS3 family. Part of the 30S ribosomal subunit.

Its function is as follows. Binds the lower part of the 30S subunit head. The polypeptide is Small ribosomal subunit protein uS3 (Methanococcus aeolicus (strain ATCC BAA-1280 / DSM 17508 / OCM 812 / Nankai-3)).